A 180-amino-acid chain; its full sequence is Crossover junction endodeoxyribonuclease RuvC (180 aa).

Active-site residues include Asp7, Glu66, and Asp138. Residues Asp7, Glu66, and Asp138 each contribute to the Mg(2+) site.

It belongs to the RuvC family. Homodimer which binds Holliday junction (HJ) DNA. The HJ becomes 2-fold symmetrical on binding to RuvC with unstacked arms; it has a different conformation from HJ DNA in complex with RuvA. In the full resolvosome a probable DNA-RuvA(4)-RuvB(12)-RuvC(2) complex forms which resolves the HJ. Mg(2+) is required as a cofactor.

The protein resides in the cytoplasm. The catalysed reaction is Endonucleolytic cleavage at a junction such as a reciprocal single-stranded crossover between two homologous DNA duplexes (Holliday junction).. The RuvA-RuvB-RuvC complex processes Holliday junction (HJ) DNA during genetic recombination and DNA repair. Endonuclease that resolves HJ intermediates. Cleaves cruciform DNA by making single-stranded nicks across the HJ at symmetrical positions within the homologous arms, yielding a 5'-phosphate and a 3'-hydroxyl group; requires a central core of homology in the junction. The consensus cleavage sequence is 5'-(A/T)TT(C/G)-3'. Cleavage occurs on the 3'-side of the TT dinucleotide at the point of strand exchange. HJ branch migration catalyzed by RuvA-RuvB allows RuvC to scan DNA until it finds its consensus sequence, where it cleaves and resolves the cruciform DNA. The chain is Crossover junction endodeoxyribonuclease RuvC from Janthinobacterium sp. (strain Marseille) (Minibacterium massiliensis).